The chain runs to 375 residues: Coproporphyrin III ferrochelatase (375 aa).

2 residues coordinate Fe-coproporphyrin III: serine 59 and tyrosine 128. Fe(2+) is bound by residues histidine 191 and glutamate 286.

It belongs to the ferrochelatase family.

It localises to the cytoplasm. The catalysed reaction is Fe-coproporphyrin III + 2 H(+) = coproporphyrin III + Fe(2+). It participates in porphyrin-containing compound metabolism; protoheme biosynthesis. Involved in coproporphyrin-dependent heme b biosynthesis. Catalyzes the insertion of ferrous iron into coproporphyrin III to form Fe-coproporphyrin III. The chain is Coproporphyrin III ferrochelatase from Streptomyces coelicolor (strain ATCC BAA-471 / A3(2) / M145).